A 337-amino-acid chain; its full sequence is Inositol 2-dehydrogenase (337 aa).

This sequence belongs to the Gfo/Idh/MocA family. Homotetramer.

The enzyme catalyses myo-inositol + NAD(+) = scyllo-inosose + NADH + H(+). In terms of biological role, involved in the oxidation of myo-inositol (MI) to 2-keto-myo-inositol (2KMI or 2-inosose). This is Inositol 2-dehydrogenase from Klebsiella pneumoniae (strain 342).